We begin with the raw amino-acid sequence, 330 residues long: Polyprenyl transferase ausN (330 aa).

The next 5 membrane-spanning stretches (helical) occupy residues 116 to 136 (AATI…LFLP), 165 to 185 (LILI…GMEP), 189 to 209 (ILSM…IDLV), 238 to 258 (AYSL…LGGL), and 260 to 280 (VPFV…FLRA).

Belongs to the UbiA prenyltransferase family. It depends on Mg(2+) as a cofactor.

The protein resides in the membrane. It catalyses the reaction 3,5-dimethylorsellinate + (2E,6E)-farnesyl diphosphate = (3R)-3-farnesyl-6-hydroxy-2,3,5-trimethyl-4-oxocyclohexa-1,5-diene-1-carboxylate + diphosphate + H(+). It participates in secondary metabolite biosynthesis; terpenoid biosynthesis. Polyprenyl transferase; part of the gene cluster B that mediates the biosynthesis of austinol and dehydroaustinol, two fungal meroterpenoids. The first step of the pathway is the synthesis of 3,5-dimethylorsellinic acid by the polyketide synthase ausA. 3,5-dimethylorsellinic acid is then prenylated by the polyprenyl transferase ausN. Further epoxidation by the FAD-dependent monooxygenase ausM and cyclization by the probable terpene cyclase ausL lead to the formation of protoaustinoid A. Protoaustinoid A is then oxidized to spiro-lactone preaustinoid A3 by the combined action of the FAD-binding monooxygenases ausB and ausC, and the dioxygenase ausE. Acid-catalyzed keto-rearrangement and ring contraction of the tetraketide portion of preaustinoid A3 by ausJ lead to the formation of preaustinoid A4. The aldo-keto reductase ausK, with the help of ausH, is involved in the next step by transforming preaustinoid A4 into isoaustinone which is in turn hydroxylated by the P450 monooxygenase ausI to form austinolide. Finally, the cytochrome P450 monooxygenase ausG modifies austinolide to austinol. Austinol can be further modified to dehydroaustinol which forms a diffusible complex with diorcinol that initiates conidiation. Due to genetic rearrangements of the clusters and the subsequent loss of some enzymes, the end products of the Emericella nidulans austinoid biosynthesis clusters are austinol and dehydroaustinol, even if additional enzymes, such as the O-acetyltransferase ausQ and the cytochrome P450 monooxygenase ausR are still functional. This Emericella nidulans (strain FGSC A4 / ATCC 38163 / CBS 112.46 / NRRL 194 / M139) (Aspergillus nidulans) protein is Polyprenyl transferase ausN.